The sequence spans 238 residues: UPF0758 protein Ajs_3450 (238 aa).

One can recognise an MPN domain in the interval 116–238; it reads VFDSPQAVQH…ALSMAEQGLV (123 aa). 3 residues coordinate Zn(2+): His-187, His-189, and Asp-200. The short motif at 187–200 is the JAMM motif element; it reads HNHPSGSVQPSRAD.

Belongs to the UPF0758 family.

This Acidovorax sp. (strain JS42) protein is UPF0758 protein Ajs_3450.